The chain runs to 315 residues: Ribosomal RNA small subunit methyltransferase H (315 aa).

Residues 33–35 (AGH), aspartate 53, phenylalanine 80, aspartate 101, and glutamine 108 contribute to the S-adenosyl-L-methionine site.

Belongs to the methyltransferase superfamily. RsmH family.

It localises to the cytoplasm. The enzyme catalyses cytidine(1402) in 16S rRNA + S-adenosyl-L-methionine = N(4)-methylcytidine(1402) in 16S rRNA + S-adenosyl-L-homocysteine + H(+). Its function is as follows. Specifically methylates the N4 position of cytidine in position 1402 (C1402) of 16S rRNA. In Natranaerobius thermophilus (strain ATCC BAA-1301 / DSM 18059 / JW/NM-WN-LF), this protein is Ribosomal RNA small subunit methyltransferase H.